The chain runs to 196 residues: Large ribosomal subunit protein bL17 (196 aa).

The tract at residues 133-196 is disordered; the sequence is AAKRDADKKE…KPAAEEKDAK (64 aa). A compositionally biased stretch (basic and acidic residues) spans 134-143; sequence AKRDADKKEA. Positions 152-164 are enriched in acidic residues; the sequence is EVAETEAAPEAEA. Over residues 184 to 196 the composition is skewed to basic and acidic residues; it reads AAEKPAAEEKDAK.

It belongs to the bacterial ribosomal protein bL17 family. In terms of assembly, part of the 50S ribosomal subunit. Contacts protein L32.

This Arthrobacter sp. (strain FB24) protein is Large ribosomal subunit protein bL17.